We begin with the raw amino-acid sequence, 1397 residues long: Clustered mitochondria protein homolog (1397 aa).

Residues 30–63 (LPSFIDQKGDLKIPSHYEETITDLKLTLTVIPKT) form a TPR 1 repeat. 2 disordered regions span residues 158–203 (TARG…LSRE) and 526–555 (DAAPPSEEEDDAGAEQEKKEEGKAEEDEEE). Residues 161–203 (GEAEKSDTNEEEQEQGKGKVGKPNEKESGETKETDSQPELSRE) show a composition bias toward basic and acidic residues. The region spanning 368-640 (DSSRSQLMLI…RTTPRDIEFI (273 aa)) is the Clu domain. The stretch at 559-595 (EKVLYGLSSDSQKILEDKSFEKPLKLLSEVFHLKPHG) is one TPR 2 repeat. Composition is skewed to basic and acidic residues over residues 686-703 (EGKLEKDGSKGTNSEEKS), 812-831 (EKVEKDRREAEEAEKAKERA), 839-860 (SDDKNQETIENSDAKSKENTES), and 1019-1033 (QREQKQESVVDNVEK). Disordered stretches follow at residues 686-707 (EGKLEKDGSKGTNSEEKSQIAL), 812-869 (EKVE…EEQP), and 1019-1050 (QREQKQESVVDNVEKKHSKKSKKKSPALPIEN). The span at 1034–1043 (KHSKKSKKKS) shows a compositional bias: basic residues. TPR repeat units lie at residues 1167 to 1200 (IAAYMNSAYFELANSQIANSLKLYLRAMQLWTST) and 1209 to 1242 (VNLLTNVADSLYYAKDYESALKLFNAALEACSHL). Polar residues-rich tracts occupy residues 1314-1338 (AQSKKSPPPTQTVAPNARVSASQAS) and 1362-1373 (PQSDPQIANQSV). Residues 1314–1397 (AQSKKSPPPT…AKSKSKHTKA (84 aa)) are disordered. Residues 1375–1384 (DILKFIEGKS) show a composition bias toward basic and acidic residues. Residues 1386-1397 (PNAKSKSKHTKA) are compositionally biased toward basic residues.

This sequence belongs to the CLU family. May associate with the eukaryotic translation initiation factor 3 (eIF-3) complex.

The protein localises to the cytoplasm. Functionally, mRNA-binding protein involved in proper cytoplasmic distribution of mitochondria. The chain is Clustered mitochondria protein homolog from Lodderomyces elongisporus (strain ATCC 11503 / CBS 2605 / JCM 1781 / NBRC 1676 / NRRL YB-4239) (Yeast).